A 314-amino-acid chain; its full sequence is 4-hydroxy-3-methylbut-2-enyl diphosphate reductase (314 aa).

Residue C12 coordinates [4Fe-4S] cluster. (2E)-4-hydroxy-3-methylbut-2-enyl diphosphate is bound by residues H41 and H74. The dimethylallyl diphosphate site is built by H41 and H74. The isopentenyl diphosphate site is built by H41 and H74. C96 provides a ligand contact to [4Fe-4S] cluster. A (2E)-4-hydroxy-3-methylbut-2-enyl diphosphate-binding site is contributed by H124. H124 lines the dimethylallyl diphosphate pocket. H124 serves as a coordination point for isopentenyl diphosphate. The active-site Proton donor is the E126. (2E)-4-hydroxy-3-methylbut-2-enyl diphosphate is bound at residue T167. Residue C197 participates in [4Fe-4S] cluster binding. (2E)-4-hydroxy-3-methylbut-2-enyl diphosphate contacts are provided by S225, S226, N227, and S269. 4 residues coordinate dimethylallyl diphosphate: S225, S226, N227, and S269. 4 residues coordinate isopentenyl diphosphate: S225, S226, N227, and S269.

The protein belongs to the IspH family. [4Fe-4S] cluster serves as cofactor.

It catalyses the reaction isopentenyl diphosphate + 2 oxidized [2Fe-2S]-[ferredoxin] + H2O = (2E)-4-hydroxy-3-methylbut-2-enyl diphosphate + 2 reduced [2Fe-2S]-[ferredoxin] + 2 H(+). The catalysed reaction is dimethylallyl diphosphate + 2 oxidized [2Fe-2S]-[ferredoxin] + H2O = (2E)-4-hydroxy-3-methylbut-2-enyl diphosphate + 2 reduced [2Fe-2S]-[ferredoxin] + 2 H(+). Its pathway is isoprenoid biosynthesis; dimethylallyl diphosphate biosynthesis; dimethylallyl diphosphate from (2E)-4-hydroxy-3-methylbutenyl diphosphate: step 1/1. It participates in isoprenoid biosynthesis; isopentenyl diphosphate biosynthesis via DXP pathway; isopentenyl diphosphate from 1-deoxy-D-xylulose 5-phosphate: step 6/6. Catalyzes the conversion of 1-hydroxy-2-methyl-2-(E)-butenyl 4-diphosphate (HMBPP) into a mixture of isopentenyl diphosphate (IPP) and dimethylallyl diphosphate (DMAPP). Acts in the terminal step of the DOXP/MEP pathway for isoprenoid precursor biosynthesis. The polypeptide is 4-hydroxy-3-methylbut-2-enyl diphosphate reductase (Pseudoalteromonas atlantica (strain T6c / ATCC BAA-1087)).